The primary structure comprises 309 residues: MKIVFMGTPDIAVPCLQKIIDENYEILGVVTQPDKPKGRGKKLGMSPVKELAIENNIPVYQPVKARDKEFIDKIKSLNPDVIVVVAFGQILPKEILEIPKLGCINVHVSLLPKYRGAAPINWVIINGEEKTGVTTMYMDEGLDTGDMILKTEVNLDENITAGELHDKMMNIGAETLKETLRLIEEGNAPREVQNHEEFSYAPIMNKSLGNIDFSKSAREIHNLVRGVNPWPSAYTTYNDVIMKVWKTKVLDEKSTKDVGTIIDVSKDGIKVSTIDNVLLIEEIQMPNKKRMLVGEYIKGNTIETGLVLG.

S109–P112 provides a ligand contact to (6S)-5,6,7,8-tetrahydrofolate.

This sequence belongs to the Fmt family.

It catalyses the reaction L-methionyl-tRNA(fMet) + (6R)-10-formyltetrahydrofolate = N-formyl-L-methionyl-tRNA(fMet) + (6S)-5,6,7,8-tetrahydrofolate + H(+). In terms of biological role, attaches a formyl group to the free amino group of methionyl-tRNA(fMet). The formyl group appears to play a dual role in the initiator identity of N-formylmethionyl-tRNA by promoting its recognition by IF2 and preventing the misappropriation of this tRNA by the elongation apparatus. The protein is Methionyl-tRNA formyltransferase of Clostridioides difficile (strain 630) (Peptoclostridium difficile).